The sequence spans 340 residues: DNA-directed RNA polymerase subunit alpha (340 aa).

Residues 1–233 form an alpha N-terminal domain (alpha-NTD) region; the sequence is MYKNWRDLIR…EQLSIFINFD (233 aa). The segment at 246 to 340 is alpha C-terminal domain (alpha-CTD); it reads DEIDKINENL…RLRGEQNEEE (95 aa).

Belongs to the RNA polymerase alpha chain family. Homodimer. The RNAP catalytic core consists of 2 alpha, 1 beta, 1 beta' and 1 omega subunit. When a sigma factor is associated with the core the holoenzyme is formed, which can initiate transcription.

It carries out the reaction RNA(n) + a ribonucleoside 5'-triphosphate = RNA(n+1) + diphosphate. Its function is as follows. DNA-dependent RNA polymerase catalyzes the transcription of DNA into RNA using the four ribonucleoside triphosphates as substrates. This chain is DNA-directed RNA polymerase subunit alpha, found in Pelobacter propionicus (strain DSM 2379 / NBRC 103807 / OttBd1).